The following is a 200-amino-acid chain: Recombination protein RecR (200 aa).

The C4-type zinc finger occupies 57–72 (CRSCRTLTEEELCPQC). In terms of domain architecture, Toprim spans 80–175 (TLLCVVEGPT…VASRIAHGVP (96 aa)).

This sequence belongs to the RecR family.

May play a role in DNA repair. It seems to be involved in an RecBC-independent recombinational process of DNA repair. It may act with RecF and RecO. The protein is Recombination protein RecR of Pseudomonas savastanoi pv. phaseolicola (strain 1448A / Race 6) (Pseudomonas syringae pv. phaseolicola (strain 1448A / Race 6)).